Reading from the N-terminus, the 565-residue chain is Translation machinery-associated protein 64 (565 aa).

One can recognise a PUA domain in the interval 89 to 170 (LPIVLTHGFV…VAVKIIHHFN (82 aa)). In terms of domain architecture, SWIB/MDM2 spans 362-447 (TLYKPFNLAK…GEILHPLLTN (86 aa)). Residues 475-547 (IKIITEMKIG…SIIDHLNKLG (73 aa)) form the SUI1 domain.

Belongs to the eIF2D family. Interacts with the 40S ribosomal subunit.

This chain is Translation machinery-associated protein 64 (TMA64), found in Saccharomyces cerevisiae (strain ATCC 204508 / S288c) (Baker's yeast).